Consider the following 660-residue polypeptide: Kinesin-like protein KIF22 (660 aa).

The interval 1 to 31 (MSLRAKTCPQRREMASATSGPGRCVSKGGLG) is disordered. The Kinesin motor domain maps to 38–363 (RVRVAVRLRP…LNFTARSKEV (326 aa)). Position 122-129 (122-129 (GPTGAGKT)) interacts with ATP. The tract at residues 391-418 (PSEAKKAKGPEEESTGSPESTAAPASAS) is disordered. Residues 405–418 (TGSPESTAAPASAS) show a composition bias toward low complexity. Ser-407, Ser-422, and Ser-447 each carry phosphoserine. Lys-460 is covalently cross-linked (Glycyl lysine isopeptide (Lys-Gly) (interchain with G-Cter in SUMO2)). Residues 460–505 (KRERMVLMKTVEEKNLEIERLKMKQKELEAKVLAQEAPDPREKENT) are a coiled coil. 2 disordered regions span residues 493-516 (AQEA…ASYS) and 534-567 (IQKQ…VEKD). Polar residues predominate over residues 505 to 516 (TPTILQPPASYS). Ser-540 and Ser-576 each carry phosphoserine.

This sequence belongs to the TRAFAC class myosin-kinesin ATPase superfamily. Kinesin family. Interacts with FAM83D and SIAH1. Post-translationally, ubiquitinated; mediated by SIAH1 and leading to its subsequent proteasomal degradation.

It is found in the nucleus. Its subcellular location is the cytoplasm. The protein resides in the cytoskeleton. Functionally, kinesin family member that is involved in spindle formation and the movements of chromosomes during mitosis and meiosis. Binds to microtubules and to DNA. Plays a role in congression of laterally attached chromosomes in NDC80-depleted cells. In Mus musculus (Mouse), this protein is Kinesin-like protein KIF22 (Kif22).